Consider the following 487-residue polypeptide: F-box/LRR-repeat protein At1g48400 (487 aa).

In terms of domain architecture, F-box spans Arg9 to Ser57. LRR repeat units follow at residues Ser71–Arg97, His125–Ala153, Ser174–Asp199, Thr225–Ser251, Thr327–Ser358, and Asn359–Gly384.

The chain is F-box/LRR-repeat protein At1g48400 from Arabidopsis thaliana (Mouse-ear cress).